Here is a 232-residue protein sequence, read N- to C-terminus: Ion-translocating oxidoreductase complex subunit E (232 aa).

6 helical membrane passes run 18-38 (ALVQLLGLCPLLAVTATVTNG), 39-59 (LGLGLATTLVLIGSNATVSII), 69-89 (IPIFVMIIAAFVTVVQLLMNA), 93-113 (ELYQALGIFIPLIVTNCAIIG), 128-148 (AFDGLMMGLGFTVVLVLLGAM), and 182-202 (PFLLAILPPGAFLGMGLLIAA).

It belongs to the NqrDE/RnfAE family. In terms of assembly, the complex is composed of six subunits: RnfA, RnfB, RnfC, RnfD, RnfE and RnfG.

It is found in the cell inner membrane. Part of a membrane-bound complex that couples electron transfer with translocation of ions across the membrane. This Pseudoalteromonas atlantica (strain T6c / ATCC BAA-1087) protein is Ion-translocating oxidoreductase complex subunit E.